Here is a 494-residue protein sequence, read N- to C-terminus: Integrin beta-like protein 1 (494 aa).

A signal peptide spans methionine 1 to alanine 23. Intrachain disulfides connect cysteine 40–cysteine 71, cysteine 51–cysteine 69, cysteine 63–cysteine 74, cysteine 76–cysteine 89, cysteine 91–cysteine 112, cysteine 96–cysteine 110, cysteine 104–cysteine 115, cysteine 117–cysteine 126, cysteine 132–cysteine 159, cysteine 143–cysteine 157, cysteine 151–cysteine 162, cysteine 164–cysteine 178, cysteine 180–cysteine 202, cysteine 185–cysteine 200, cysteine 194–cysteine 205, cysteine 207–cysteine 216, cysteine 220–cysteine 247, cysteine 231–cysteine 245, cysteine 239–cysteine 250, cysteine 252–cysteine 269, cysteine 271–cysteine 296, cysteine 276–cysteine 294, cysteine 288–cysteine 299, cysteine 301–cysteine 310, cysteine 316–cysteine 343, cysteine 327–cysteine 341, cysteine 335–cysteine 346, cysteine 348–cysteine 361, cysteine 363–cysteine 384, cysteine 368–cysteine 382, cysteine 376–cysteine 387, cysteine 389–cysteine 398, cysteine 404–cysteine 431, cysteine 415–cysteine 429, cysteine 423–cysteine 434, cysteine 436–cysteine 448, cysteine 450–cysteine 471, cysteine 455–cysteine 469, cysteine 463–cysteine 474, and cysteine 476–cysteine 485. I-EGF domains lie at cysteine 40–glutamate 90, cysteine 91–glutamine 127, cysteine 132–glutamate 179, cysteine 180–glutamate 217, cysteine 220–glutamate 270, cysteine 271–glutamate 311, cysteine 316–glutamate 362, cysteine 363–glutamine 399, cysteine 404–aspartate 449, and cysteine 450–glutamate 486. The stretch at cysteine 51 to valine 95 is one I repeat. The interval cysteine 51–proline 494 is cysteine-rich tandem repeats. The stretch at cysteine 96–methionine 142 is one II repeat. An III repeat occupies cysteine 143–glutamate 184. An IV repeat occupies cysteine 185 to arginine 230. The stretch at cysteine 231–aspartate 275 is one V repeat. The VI repeat unit spans residues cysteine 276–lysine 326. Residues cysteine 327–arginine 367 form a VII repeat. The stretch at cysteine 368–leucine 414 is one VIII repeat. The N-linked (GlcNAc...) asparagine glycan is linked to asparagine 405. An IX repeat occupies cysteine 415–aspartate 454. One copy of the X repeat lies at cysteine 455–proline 494.

It is found in the secreted. The sequence is that of Integrin beta-like protein 1 (Itgbl1) from Rattus norvegicus (Rat).